Consider the following 338-residue polypeptide: Aspartate carbamoyltransferase catalytic subunit (338 aa).

Residues Arg-59 and Thr-60 each contribute to the carbamoyl phosphate site. Residue Lys-87 coordinates L-aspartate. Arg-109, His-142, and Gln-145 together coordinate carbamoyl phosphate. The L-aspartate site is built by Arg-182 and Arg-253. Positions 294 and 295 each coordinate carbamoyl phosphate.

This sequence belongs to the aspartate/ornithine carbamoyltransferase superfamily. ATCase family. Heterododecamer (2C3:3R2) of six catalytic PyrB chains organized as two trimers (C3), and six regulatory PyrI chains organized as three dimers (R2).

The enzyme catalyses carbamoyl phosphate + L-aspartate = N-carbamoyl-L-aspartate + phosphate + H(+). It participates in pyrimidine metabolism; UMP biosynthesis via de novo pathway; (S)-dihydroorotate from bicarbonate: step 2/3. Catalyzes the condensation of carbamoyl phosphate and aspartate to form carbamoyl aspartate and inorganic phosphate, the committed step in the de novo pyrimidine nucleotide biosynthesis pathway. The protein is Aspartate carbamoyltransferase catalytic subunit of Prochlorococcus marinus (strain AS9601).